We begin with the raw amino-acid sequence, 118 residues long: Small integral membrane protein 17 (118 aa).

Positions 1 to 84 (MQSLRPEQTR…DDESEGSQGF (84 aa)) are disordered. Positions 13-42 (LEPERTKTLLPRESRAWEKPPHPACTKDWE) are enriched in basic and acidic residues. A helical membrane pass occupies residues 96–116 (IVLVVCVLFLFLVLTGMPMMF).

The protein localises to the membrane. The chain is Small integral membrane protein 17 (SMIM17) from Homo sapiens (Human).